The sequence spans 716 residues: Polyribonucleotide nucleotidyltransferase (716 aa).

2 residues coordinate Mg(2+): aspartate 485 and aspartate 491. One can recognise a KH domain in the interval 552–611 (PKITTISVPKEKIRDVIGSGGKVIREIVEYSGAKVDIGDDGTVTIAASNDEQAQKAIARI). Residues 621 to 689 (GRIYEGKVVK…DRGKVKLSMR (69 aa)) form the S1 motif domain.

The protein belongs to the polyribonucleotide nucleotidyltransferase family. Mg(2+) serves as cofactor.

The protein resides in the cytoplasm. It catalyses the reaction RNA(n+1) + phosphate = RNA(n) + a ribonucleoside 5'-diphosphate. Involved in mRNA degradation. Catalyzes the phosphorolysis of single-stranded polyribonucleotides processively in the 3'- to 5'-direction. The protein is Polyribonucleotide nucleotidyltransferase of Gluconobacter oxydans (strain 621H) (Gluconobacter suboxydans).